We begin with the raw amino-acid sequence, 333 residues long: L-lactate dehydrogenase A chain (333 aa).

NAD(+)-binding positions include 30-58 (GMVG…MEDK) and R100. Substrate is bound by residues R107, N139, and R170. N139 serves as a coordination point for NAD(+). H194 serves as the catalytic Proton acceptor. Substrate is bound at residue T249.

This sequence belongs to the LDH/MDH superfamily. LDH family. As to quaternary structure, homotetramer.

It is found in the cytoplasm. The catalysed reaction is (S)-lactate + NAD(+) = pyruvate + NADH + H(+). It functions in the pathway fermentation; pyruvate fermentation to lactate; (S)-lactate from pyruvate: step 1/1. Its function is as follows. Interconverts simultaneously and stereospecifically pyruvate and lactate with concomitant interconversion of NADH and NAD(+). This chain is L-lactate dehydrogenase A chain (ldha), found in Danio rerio (Zebrafish).